Consider the following 57-residue polypeptide: Dendroaspis polylepis MT9 (57 aa).

4 disulfide bridges follow: Cys3–Cys22, Cys17–Cys36, Cys38–Cys49, and Cys50–Cys55.

Belongs to the three-finger toxin family. Short-chain subfamily. Expressed by the venom gland.

Its subcellular location is the secreted. When tested on muscarinic GPCR, specifically antagonizes the type 2 receptor (CHRM2) subtype (Ki/Kd=120-399 nM). Ex vivo, it reverses the M2R-agonist-induced relaxation in rat and human arteries. The polypeptide is Dendroaspis polylepis MT9 (Dendroaspis polylepis polylepis (Black mamba)).